The sequence spans 278 residues: Dermonecrotic toxin LspiSicTox-betaIE2iii (278 aa).

Residue histidine 5 is part of the active site. Positions 25 and 27 each coordinate Mg(2+). Catalysis depends on histidine 41, which acts as the Nucleophile. 2 disulfide bridges follow: cysteine 45–cysteine 51 and cysteine 47–cysteine 190. Aspartate 85 contacts Mg(2+).

Belongs to the arthropod phospholipase D family. Class II subfamily. It depends on Mg(2+) as a cofactor. In terms of tissue distribution, expressed by the venom gland.

It is found in the secreted. It catalyses the reaction an N-(acyl)-sphingosylphosphocholine = an N-(acyl)-sphingosyl-1,3-cyclic phosphate + choline. The catalysed reaction is an N-(acyl)-sphingosylphosphoethanolamine = an N-(acyl)-sphingosyl-1,3-cyclic phosphate + ethanolamine. It carries out the reaction a 1-acyl-sn-glycero-3-phosphocholine = a 1-acyl-sn-glycero-2,3-cyclic phosphate + choline. The enzyme catalyses a 1-acyl-sn-glycero-3-phosphoethanolamine = a 1-acyl-sn-glycero-2,3-cyclic phosphate + ethanolamine. Its function is as follows. Dermonecrotic toxins cleave the phosphodiester linkage between the phosphate and headgroup of certain phospholipids (sphingolipid and lysolipid substrates), forming an alcohol (often choline) and a cyclic phosphate. This toxin acts on sphingomyelin (SM). It may also act on ceramide phosphoethanolamine (CPE), lysophosphatidylcholine (LPC) and lysophosphatidylethanolamine (LPE), but not on lysophosphatidylserine (LPS), and lysophosphatidylglycerol (LPG). It acts by transphosphatidylation, releasing exclusively cyclic phosphate products as second products. Induces dermonecrosis, hemolysis, increased vascular permeability, edema, inflammatory response, and platelet aggregation. The chain is Dermonecrotic toxin LspiSicTox-betaIE2iii from Loxosceles spinulosa (Recluse spider).